The sequence spans 308 residues: Microtubule integrity protein mal3 (308 aa).

The 102-residue stretch at 2-103 folds into the Calponin-homology (CH) domain; it reads SESRQELLAW…FVQWAKRFWD (102 aa). Positions 117–162 are disordered; it reads RGNRGPANTRVMNSSAGATGPSRRRQVSSGSSTPSMTKSSANNNNV. Residues 144–162 show a composition bias toward low complexity; the sequence is SSGSSTPSMTKSSANNNNV. Positions 173 to 247 constitute an EB1 C-terminal domain; sequence RAKQAQQQIT…LYSTEDGFEL (75 aa).

It belongs to the MAPRE family. In terms of assembly, interacts with tea2.

It localises to the cytoplasm. The protein resides in the cytoskeleton. In terms of biological role, may play a role in regulating the integrity of microtubules possibly by influencing their stability. Involved in an anchoring mechanism to maintain tea2 and tip1 at growing microtubule ends. Strongly stimulates the ATPase activity of tea2. This chain is Microtubule integrity protein mal3 (mal3), found in Schizosaccharomyces pombe (strain 972 / ATCC 24843) (Fission yeast).